Reading from the N-terminus, the 281-residue chain is DegV domain-containing protein (281 aa).

The DegV domain occupies 3–280; that stretch reads WKIVSDSGCD…EGGLLMGYEI (278 aa). Hexadecanoate is bound by residues serine 63 and serine 91.

May bind long-chain fatty acids, such as palmitate, and may play a role in lipid transport or fatty acid metabolism. This is DegV domain-containing protein from Streptococcus gordonii.